The sequence spans 56 residues: Small ribosomal subunit protein uS14 (56 aa).

This sequence belongs to the universal ribosomal protein uS14 family. As to quaternary structure, component of the small ribosomal subunit (SSU). Mature yeast ribosomes consist of a small (40S) and a large (60S) subunit. The 40S small subunit contains 1 molecule of ribosomal RNA (18S rRNA) and at least 33 different proteins. The large 60S subunit contains 3 rRNA molecules (25S, 5.8S and 5S rRNA) and at least 46 different proteins.

The protein localises to the cytoplasm. Its subcellular location is the nucleus. In terms of biological role, component of the ribosome, a large ribonucleoprotein complex responsible for the synthesis of proteins in the cell. The small ribosomal subunit (SSU) binds messenger RNAs (mRNAs) and translates the encoded message by selecting cognate aminoacyl-transfer RNA (tRNA) molecules. The large subunit (LSU) contains the ribosomal catalytic site termed the peptidyl transferase center (PTC), which catalyzes the formation of peptide bonds, thereby polymerizing the amino acids delivered by tRNAs into a polypeptide chain. The nascent polypeptides leave the ribosome through a tunnel in the LSU and interact with protein factors that function in enzymatic processing, targeting, and the membrane insertion of nascent chains at the exit of the ribosomal tunnel. This Schizosaccharomyces pombe (strain 972 / ATCC 24843) (Fission yeast) protein is Small ribosomal subunit protein uS14 (rps29).